Consider the following 1381-residue polypeptide: Serine-aspartate repeat-containing protein D (1381 aa).

The signal sequence occupies residues 1-35 (MLNRENKTAITRKGMVSNRLNKFSIRKYTVGTASI). Residues 23–34 (FSIRKYTVGTAS) carry the YSIRK-G/S signaling motif motif. A ligand binding A region region spans residues 36 to 568 (LVGTTLIFGL…NNQSGGAGQE (533 aa)). The interval 54 to 185 (ESTNKELNEA…NKKVDAKTES (132 aa)) is disordered. Polar residues-rich tracts occupy residues 62-71 (EATTSASDNQ) and 94-108 (EMVS…SNGN). Basic and acidic residues predominate over residues 130–145 (KSDEQASPKSTNEDLN). 2 stretches are compositionally biased toward polar residues: residues 146 to 155 (TKQTISNQEA) and 163 to 173 (NKSVVNVQPTN). Residues 174-183 (EENKKVDAKT) are compositionally biased toward basic and acidic residues. CNA-B domains are found at residues 569–680 (VYKI…IYKP), 681–791 (KYNL…YKTP), 792–901 (KYNL…FYKP), 902–1012 (TYNL…YKTP), and 1013–1123 (KYSL…EEET). 3 disordered regions span residues 857–883 (ETPS…TSTT), 972–992 (YTPT…GLTT), and 1078–1357 (EKPA…SNNA). Composition is skewed to polar residues over residues 860–869 (SGYTPTQVGS) and 972–981 (YTPTSVTSGN). Acidic residues-rich tracts occupy residues 1091 to 1101 (TEDDKDADGGE), 1118 to 1134 (YYEE…DSDS), 1142 to 1164 (SDSD…DSDS), and 1172 to 1320 (SDSD…DSDS). An LPXTG sorting signal motif is present at residues 1344–1348 (LPETG). A Pentaglycyl murein peptidoglycan amidated threonine modification is found at Thr1347. The propeptide at 1348-1381 (GNENSGSNNATLFGGLFAALGSLLLFGRRKKQNK) is removed by sortase.

It belongs to the serine-aspartate repeat-containing protein (SDr) family. Interacts with host DSG1; this interaction increases S.aureus adherence to keratinocytes.

The protein resides in the secreted. The protein localises to the cell wall. Its function is as follows. Cell surface-associated calcium-binding protein which plays an important role in adhesion and pathogenesis. Mediates interactions with components of the extracellular matrix such as host DSG1 to promote bacterial adhesion to host cells. Contributes to the resistance to killing by innate immune components such as neutrophils present in blood and thus attenuates bacterial clearance. This Staphylococcus aureus (strain USA300) protein is Serine-aspartate repeat-containing protein D (sdrD).